The primary structure comprises 99 residues: Glycine-rich protein (99 aa).

The signal sequence occupies residues 1 to 18; that stretch reads MKSMIAVLLLALVATSMA.

This sequence belongs to the non-disulfide-bridged peptide (NDBP) superfamily. Expressed by the venom gland.

Its subcellular location is the secreted. In Lychas mucronatus (Chinese swimming scorpion), this protein is Glycine-rich protein.